The following is a 477-amino-acid chain: Lactate utilization protein B (477 aa).

4Fe-4S ferredoxin-type domains follow at residues 304–334 and 353–382; these read GTEF…GHSY and YDDY…LHEL. [4Fe-4S] cluster is bound by residues Cys313, Cys316, Cys319, Cys323, Cys366, Cys369, and Cys373. Positions 433–477 are disordered; the sequence is KEDGKITKGPGPLKQWTQIRDFPAPNKSRFRDWFEDRRKEKGEDK. Residues 461-477 are compositionally biased toward basic and acidic residues; the sequence is RFRDWFEDRRKEKGEDK.

Belongs to the LutB/YkgF family.

In terms of biological role, is involved in L-lactate degradation and allows cells to grow with lactate as the sole carbon source. Has probably a role as an electron transporter during oxidation of L-lactate. This Bacillus licheniformis (strain ATCC 14580 / DSM 13 / JCM 2505 / CCUG 7422 / NBRC 12200 / NCIMB 9375 / NCTC 10341 / NRRL NRS-1264 / Gibson 46) protein is Lactate utilization protein B.